Consider the following 815-residue polypeptide: Bifunctional purine biosynthetic protein purD (815 aa).

The interval 6–452 (NILVIGSGSR…YRKDIGQKAL (447 aa)) is GARS. Residues 113-343 (KDFMARNNIP…LFEIVLACIE (231 aa)) enclose the ATP-grasp domain. Residue 139–200 (IESLNYKIVL…EEFLDGEECS (62 aa)) participates in ATP binding. Mg(2+)-binding residues include Glu313 and Asn315. Residues 469-801 (VSYSESGVDI…KVYKIGKIIN (333 aa)) are AIRS.

In the N-terminal section; belongs to the GARS family. This sequence in the C-terminal section; belongs to the AIR synthase family. Requires Mg(2+) as cofactor. Mn(2+) is required as a cofactor.

It is found in the cytoplasm. It localises to the cytosol. The catalysed reaction is 5-phospho-beta-D-ribosylamine + glycine + ATP = N(1)-(5-phospho-beta-D-ribosyl)glycinamide + ADP + phosphate + H(+). It catalyses the reaction 2-formamido-N(1)-(5-O-phospho-beta-D-ribosyl)acetamidine + ATP = 5-amino-1-(5-phospho-beta-D-ribosyl)imidazole + ADP + phosphate + H(+). It functions in the pathway purine metabolism; IMP biosynthesis via de novo pathway; 5-amino-1-(5-phospho-D-ribosyl)imidazole from N(2)-formyl-N(1)-(5-phospho-D-ribosyl)glycinamide: step 2/2. It participates in purine metabolism; IMP biosynthesis via de novo pathway; N(1)-(5-phospho-D-ribosyl)glycinamide from 5-phospho-alpha-D-ribose 1-diphosphate: step 2/2. In terms of biological role, catalyzes the second and fifth step in the 'de novo' purine biosynthesis pathway; contains phosphoribosylamine--glycine ligase (GARS) and phosphoribosylformylglycinamidine cyclo-ligase (AIRS) activities. The protein is Bifunctional purine biosynthetic protein purD (purD) of Dictyostelium discoideum (Social amoeba).